Consider the following 229-residue polypeptide: Peptidase E (229 aa).

Catalysis depends on charge relay system residues Ser120, Asp135, and His157.

Belongs to the peptidase S51 family.

It is found in the cytoplasm. It catalyses the reaction Dipeptidase E catalyzes the hydrolysis of dipeptides Asp-|-Xaa. It does not act on peptides with N-terminal Glu, Asn or Gln, nor does it cleave isoaspartyl peptides.. In terms of biological role, hydrolyzes dipeptides containing N-terminal aspartate residues. May play a role in allowing the cell to use peptide aspartate to spare carbon otherwise required for the synthesis of the aspartate family of amino acids. The polypeptide is Peptidase E (Shigella sonnei (strain Ss046)).